The sequence spans 3567 residues: MTDSEKVAEYLRRATLDLRAARQRIRELESDPIAIVSMACRLPGGVNTPQRLWELLREGGETLSGFPTDRGWDLARLHHPDPDNPGTSYVDKGGFLDDAAGFDAEFFGVSPREAAAMDPQQRLLLETSWELVENAGIDPHSLRGTATGVFLGVAKFGYGEDTAAAEDVEGYSVTGVAPAVASGRISYTMGLEGPSISVDTACSSSLVALHLAVESLRKGESSMAVVGGAAVMATPGVFVDFSRQRALAADGRSKAFGAGADGFGFSEGVTLVLLERLSEARRNGHEVLAVVRGSALNQDGASNGLSAPSGPAQRRVIRQALESCGLEPGDVDAVEAHGTGTALGDPIEANALLDTYGRDRDADRPLWLGSVKSNIGHTQAAAGVTGLLKVVLALRNGELPATLHVEEPTPHVDWSSGGVALLAGNQPWRRGERTRRARVSAFGISGTNAHVIVEEAPEREHRETTAHDGRPVPLVVSARTTAALRAQAAQIAELLERPDADLAGVGLGLATTRARHEHRAAVVASTREEAVRGLREIAAGAATADAVVEGVTEVDGRNVVFLFPGQGSQWAGMGAELLSSSPVFAGKIRACDESMAPMQDWKVSDVLRQAPGAPGLDRVDVVQPVLFAVMVSLAELWRSYGVEPAAVVGHSQGEIAAAHVAGALTLEDAAKLVVGRSRLMRSLSGEGGMAAVALGEAAVRERLRPWQDRLSVAAVNGPRSVVVSGEPGALRAFSEDCAAEGIRVRDIDVDYASHSPQIERVREELLETTGDIAPRPARVTFHSTVESRSMDGTELDARYWYRNLRETVRFADAVTRLAESGYDAFIEVSPHPVVVQAVEEAVEEADGAEDAVVVGSLHRDGGDLSAFLRSMATAHVSGVDIRWDVALPGAAPFALPTYPFQRKRYWLQPAAPAAASDELAYRVSWTPIEKPESGNLDGDWLVVTPLISPEWTEMLCEAINANGGRALRCEVDTSASRTEMAQAVAQAGTGFRGVLSLLSSDESACRPGVPAGAVGLLTLVQALGDAGVDAPVWCLTQGAVRTPADDDLARPAQTTAHGFAQVAGLELPGRWGGVVDLPESVDDAALRLLVAVLRGGGRAEDHLAVRDGRLHGRRVVRASLPQSGSRSWTPHGTVLVTGAASPVGDQLVRWLADRGAERLVLAGACPGDDLLAAVEEAGASAVVCAQDAAALREALGDEPVTALVHAGTLTNFGSISEVAPEEFAETIAAKTALLAVLDEVLGDRAVEREVYCSSVAGIWGGAGMAAYAAGSAYLDALAEHHRARGRSCTSVAWTPWALPGGAVDDGYLRERGLRSLSADRAMRTWERVLAAGPVSVAVADVDWPVLSEGFAATRPTALFAELAGRGGQAEAEPDSGPTGEPAQRLAGLSPDEQQENLLELVANAVAEVLGHESAAEINVRRAFSELGLDSLNAMALRKRLSASTGLRLPASLVFDHPTVTALAQHLRARLVGDADQAAVRVVGAADESEPIAIVGIGCRFPGGIGSPEQLWRVLAEGANLTTGFPADRGWDIGRLYHPDPDNPGTSYVDKGGFLTDAADFDPGFFGITPREALAMDPQQRLMLETAWEAVERAGIDPDALRGTDTGVFVGMNGQSYMQLLAGEAERVDGYQGLGNSASVLSGRIAYTFGWEGPALTVDTACSSSLVGIHLAMQALRRGECSLALAGGVTVMSDPYTFVDFSTQRGLASDGRCKAFSARADGFALSEGVAALVLEPLSRARANGHQVLAVLRGSAVNQDGASNGLAAPNGPSQERVIRQALAASGVPAADVDVVEAHGTGTELGDPIEAGALIATYGQDRDRPLRLGSVKTNIGHTQAAAGAAGVIKVVLAMRHGMLPRSLHADELSPHIDWESGAVEVLREEVPWPAGERPRRAGVSSFGVSGTNAHVIVEEAPAEQEAARTERGPLPFVLSGRSEAVVAAQARALAEHLRDTPELGLTDAAWTLATGRARFDVRAAVLGDDRAGVCAELDALAEGRPSADAVAPVTSAPRKPVLVFPGQGAQWVGMARDLLESSEVFAESMSRCAEALSPHTDWKLLDVVRGDGGPDPHERVDVLQPVLFSIMVSLAELWRAHGVTPAAVVGHSQGEIAAAHVAGALSLEAAAKVVALRSQVLRELDDQGGMVSVGASRDELETVLARWDGRVAVAAVNGPGTSVVAGPTAELDEFFAEAEAREMKPRRIAVRYASHSPEVARIEDRLAAELGTITAVRGSVPLHSTVTGEVIDTSAMDASYWYRNLRRPVLFEQAVRGLVEQGFDTFVEVSPHPVLLMAVEETAEHAGAEVTCVPTLRREQSGPHEFLRNLLRAHVHGVGADLRPAVAGGRPAELPTYPFEHQRFWPRPHRPADVSALGVRGAEHPLLLAAVDVPGHGGAVFTGRLSTDEQPWLAEHVVGGRTLVPGSVLVDLALAAGEDVGLPVLEELVLQRPLVLAGAGALLRMSVGAPDESGRRTIDVHAAEDVADLADAQWSQHATGTLAQGVAAGPRDTEQWPPEDAVRIPLDDHYDGLAEQGYEYGPSFQALRAAWRKDDSVYAEVSIAADEEGYAFHPVLLDAVAQTLSLGALGEPGGGKLPFAWNTVTLHASGATSVRVVATPAGADAMALRVTDPAGHLVATVDSLVVRSTGEKWEQPEPRGGEGELHALDWGRLAEPGSTGRVVAADASDLDAVLRSGEPEPDAVLVRYEPEGDDPRAAARHGVLWAAALVRRWLEQEELPGATLVIATSGAVTVSDDDSVPEPGAAAMWGVIRCAQAESPDRFVLLDTDAEPGMLPAVPDNPQLALRGDDVFVPRLSPLAPSALTLPAGTQRLVPGDGAIDSVAFEPAPDVEQPLRAGEVRVDVRATGVNFRDVLLALGMYPQKADMGTEAAGVVTAVGPDVDAFAPGDRVLGLFQGAFAPIAVTDHRLLARVPDGWSDADAAAVPIAYTTAHYALHDLAGLRAGQSVLIHAAAGGVGMAAVALARRAGAEVLATAGPAKHGTLRALGLDDEHIASSRETGFARKFRERTGGRGVDVVLNSLTGELLDESADLLAEDGVFVEMGKTDLRDAGDFRGRYAPFDLGEAGDDRLGEILREVVGLLGAGELDRLPVSAWELGSAPAALQHMSRGRHVGKLVLTQPAPVDPDGTVLITGGTGTLGRLLARHLVTEHGVRHLLLVSRRGADAPGSDELRAEIEDLGASAEIAACDTADRDALSALLDGLPRPLTGVVHAAGVLADGLVTSIDEPAVEQVLRAKVDAAWNLHELTANTGLSFFVLFSSAASVLAGPGQGVYAAANESLNALAALRRTRGLPAKALGWGLWAQASEMTSGLGDRIARTGVAALPTERALALFDSALRRGGEVVFPLSINRSALRRAEFVPEVLRGMVRAKLRAAGQAEAAGPNVVDRLAGRSESDQVAGLAELVRSHAAAVSGYGSADQLPERKAFKDLGFDSLAAVELRNRLGTATGVRLPSTLVFDHPTPLAVAEHLRDRLFAASPAVDIGDRLDELEKALEALSAEDGHDDVGQRLESLLRRWNSRRADAPSTSAISEDASDDELFSMLDQRFGGGEDL.

A Ketosynthase family 3 (KS3) 1 domain is found at 30–455 (SDPIAIVSMA…GTNAHVIVEE (426 aa)). Module regions lie at residues 33–1467 (IAIV…QHLR) and 1491–3485 (IAIV…EHLR). The active-site Acyl-thioester intermediate; for beta-ketoacyl synthase 1 activity is cysteine 202. Residues histidine 337 and histidine 377 each act as for beta-ketoacyl synthase 1 activity in the active site. The tract at residues 560 to 880 (VFLFPGQGSQ…MATAHVSGVD (321 aa)) is acyltransferase 1. Residue serine 651 is the Acyl-ester intermediate; for acyltransferase 1 activity of the active site. Positions 1132 to 1297 (GTVLVTGAAS…CTSVAWTPWA (166 aa)) are C2-type beta-ketoacyl reductase 1. Tyrosine 1267 serves as the catalytic For C2-type beta-ketoacyl reductase 1 and probable racemase activity. The tract at residues 1364 to 1385 (GRGGQAEAEPDSGPTGEPAQRL) is disordered. In terms of domain architecture, Carrier 1 spans 1395 to 1470 (ENLLELVANA…ALAQHLRARL (76 aa)). An O-(pantetheine 4'-phosphoryl)serine modification is found at serine 1430. Positions 1488–1912 (SEPIAIVGIG…GTNAHVIVEE (425 aa)) constitute a Ketosynthase family 3 (KS3) 2 domain. The active-site Acyl-thioester intermediate; for beta-ketoacyl synthase 2 activity is the cysteine 1661. Catalysis depends on for beta-ketoacyl synthase 2 activity residues histidine 1796 and histidine 1834. Residues 2015–2331 (LVFPGQGAQW…NLLRAHVHGV (317 aa)) are acyltransferase 2. The Acyl-ester intermediate; for acyltransferase 2 activity role is filled by serine 2105. Positions 2377–2502 (HPLLLAAVDV…GTLAQGVAAG (126 aa)) are N-terminal hotdog fold. Residues 2377 to 2645 (HPLLLAAVDV…SLVVRSTGEK (269 aa)) form a dehydratase region. In terms of domain architecture, PKS/mFAS DH spans 2377–2648 (HPLLLAAVDV…VRSTGEKWEQ (272 aa)). Residue histidine 2409 is the Proton acceptor; for dehydratase activity of the active site. Residues 2514 to 2648 (AVRIPLDDHY…VRSTGEKWEQ (135 aa)) form a C-terminal hotdog fold region. Aspartate 2571 serves as the catalytic Proton donor; for dehydratase activity. An enoyl reductase region spans residues 2831 to 3131 (GAIDSVAFEP…RGRHVGKLVL (301 aa)). The active-site For enoyl reductase activity is the tyrosine 2874. Residues 2964–2973 (HAAAGGVGMA), 3149–3152 (TGTL), 3173–3176 (SRRG), 3202–3203 (DT), lysine 3250, and 3272–3273 (FS) contribute to the NADP(+) site. A beta-ketoacyl reductase 2 region spans residues 3141-3317 (GTVLITGGTG…AKALGWGLWA (177 aa)). The active-site For beta-ketoacyl reductase 2 activity is tyrosine 3287. The Carrier 2 domain maps to 3413–3488 (AGLAELVRSH…AVAEHLRDRL (76 aa)). An O-(pantetheine 4'-phosphoryl)serine modification is found at serine 3448.

As to quaternary structure, homodimer. Erythronolide synthase is composed of EryAI, EryAII and EryAIII multimodular (2 modules) polypeptides each coding for a functional synthase subunit which participates in 2 of the six FAS-like elongation steps required for formation of the polyketide. Module 1, 2, 3, 4, 5, and 6 participating in biosynthesis steps 1, 2, 3, 4, 5, and 6, respectively. Pantetheine 4'-phosphate serves as cofactor.

The enzyme catalyses 6 (S)-methylmalonyl-CoA + propanoyl-CoA + 6 NADPH + 12 H(+) = 6-deoxyerythronolide B + 6 CO2 + 6 NADP(+) + 7 CoA + H2O. It functions in the pathway antibiotic biosynthesis; erythromycin biosynthesis. Its function is as follows. Involved in the biosynthesis of antibiotic erythromycin via the biosynthesis of its aglycone precursor, 6-deoxyerythronolide B (6-dEB). This chain is Erythronolide synthase EryA2, found in Saccharopolyspora erythraea (Streptomyces erythraeus).